Here is a 403-residue protein sequence, read N- to C-terminus: CCA-adding enzyme (403 aa).

ATP-binding residues include Gly-32 and Arg-35. CTP-binding residues include Gly-32 and Arg-35. Mg(2+) contacts are provided by Asp-45 and Asp-47. ATP is bound by residues Arg-116, Asp-159, Arg-162, Arg-165, and Arg-168. CTP-binding residues include Arg-116, Asp-159, Arg-162, Arg-165, and Arg-168.

This sequence belongs to the tRNA nucleotidyltransferase/poly(A) polymerase family. Bacterial CCA-adding enzyme type 3 subfamily. In terms of assembly, homodimer. It depends on Mg(2+) as a cofactor.

It carries out the reaction a tRNA precursor + 2 CTP + ATP = a tRNA with a 3' CCA end + 3 diphosphate. The catalysed reaction is a tRNA with a 3' CCA end + 2 CTP + ATP = a tRNA with a 3' CCACCA end + 3 diphosphate. In terms of biological role, catalyzes the addition and repair of the essential 3'-terminal CCA sequence in tRNAs without using a nucleic acid template. Adds these three nucleotides in the order of C, C, and A to the tRNA nucleotide-73, using CTP and ATP as substrates and producing inorganic pyrophosphate. tRNA 3'-terminal CCA addition is required both for tRNA processing and repair. Also involved in tRNA surveillance by mediating tandem CCA addition to generate a CCACCA at the 3' terminus of unstable tRNAs. While stable tRNAs receive only 3'-terminal CCA, unstable tRNAs are marked with CCACCA and rapidly degraded. The chain is CCA-adding enzyme from Limosilactobacillus reuteri (strain DSM 20016) (Lactobacillus reuteri).